The following is a 289-amino-acid chain: Bis(5'-nucleosyl)-tetraphosphatase, symmetrical (289 aa).

Belongs to the Ap4A hydrolase family.

The catalysed reaction is P(1),P(4)-bis(5'-adenosyl) tetraphosphate + H2O = 2 ADP + 2 H(+). Its function is as follows. Hydrolyzes diadenosine 5',5'''-P1,P4-tetraphosphate to yield ADP. This is Bis(5'-nucleosyl)-tetraphosphatase, symmetrical from Pseudomonas fluorescens (strain ATCC BAA-477 / NRRL B-23932 / Pf-5).